The primary structure comprises 318 residues: Aspartate carbamoyltransferase catalytic subunit (318 aa).

Arg67 and Thr68 together coordinate carbamoyl phosphate. Lys95 is a binding site for L-aspartate. Carbamoyl phosphate-binding residues include Arg117, His145, and Gln148. Arg178 and Arg236 together coordinate L-aspartate. Carbamoyl phosphate is bound by residues Gly277 and Pro278.

The protein belongs to the aspartate/ornithine carbamoyltransferase superfamily. ATCase family. In terms of assembly, heterododecamer (2C3:3R2) of six catalytic PyrB chains organized as two trimers (C3), and six regulatory PyrI chains organized as three dimers (R2).

It carries out the reaction carbamoyl phosphate + L-aspartate = N-carbamoyl-L-aspartate + phosphate + H(+). It functions in the pathway pyrimidine metabolism; UMP biosynthesis via de novo pathway; (S)-dihydroorotate from bicarbonate: step 2/3. Functionally, catalyzes the condensation of carbamoyl phosphate and aspartate to form carbamoyl aspartate and inorganic phosphate, the committed step in the de novo pyrimidine nucleotide biosynthesis pathway. The chain is Aspartate carbamoyltransferase catalytic subunit from Roseiflexus castenholzii (strain DSM 13941 / HLO8).